The following is a 313-amino-acid chain: Glyoxylate/hydroxypyruvate reductase A (313 aa).

Residue arginine 228 is part of the active site. Catalysis depends on histidine 276, which acts as the Proton donor.

Belongs to the D-isomer specific 2-hydroxyacid dehydrogenase family. GhrA subfamily.

It localises to the cytoplasm. The catalysed reaction is glycolate + NADP(+) = glyoxylate + NADPH + H(+). It catalyses the reaction (R)-glycerate + NAD(+) = 3-hydroxypyruvate + NADH + H(+). It carries out the reaction (R)-glycerate + NADP(+) = 3-hydroxypyruvate + NADPH + H(+). Catalyzes the NADPH-dependent reduction of glyoxylate and hydroxypyruvate into glycolate and glycerate, respectively. This chain is Glyoxylate/hydroxypyruvate reductase A, found in Photorhabdus laumondii subsp. laumondii (strain DSM 15139 / CIP 105565 / TT01) (Photorhabdus luminescens subsp. laumondii).